The primary structure comprises 111 residues: Cell division protein FtsB (111 aa).

Residues 1 to 3 (MGK) are Cytoplasmic-facing. Residues 4–21 (LTLLLLILLGWLQYSLWL) form a helical membrane-spanning segment. The Periplasmic portion of the chain corresponds to 22 to 111 (GKNGIHDYVR…TNTPSNNIQR (90 aa)). Positions 33–63 (KDDVVVQQGNNAKLKDRNEQLFAEIDDLNGG) form a coiled coil. Positions 90-111 (ESNHRNANTAPSTNTPSNNIQR) are disordered. The span at 95–111 (NANTAPSTNTPSNNIQR) shows a compositional bias: low complexity.

The protein belongs to the FtsB family. As to quaternary structure, part of a complex composed of FtsB, FtsL and FtsQ.

It is found in the cell inner membrane. Its function is as follows. Essential cell division protein. May link together the upstream cell division proteins, which are predominantly cytoplasmic, with the downstream cell division proteins, which are predominantly periplasmic. In Pectobacterium carotovorum subsp. carotovorum (strain PC1), this protein is Cell division protein FtsB.